A 184-amino-acid polypeptide reads, in one-letter code: Tyrosine-protein kinase receptor Tie-1 (184 aa).

Residues 1-164 (QLLQFAADVA…RMQEARKAYV (164 aa)) enclose the Protein kinase domain. The Proton acceptor role is filled by D25. The residue at position 53 (Y53) is a Phosphotyrosine; by autocatalysis.

It belongs to the protein kinase superfamily. Tyr protein kinase family. Tie subfamily. Interacts with svep1. As to expression, expressed in most populations of endothelial cells in 24 hours embryos, including the endocardium.

It localises to the cell membrane. It carries out the reaction L-tyrosyl-[protein] + ATP = O-phospho-L-tyrosyl-[protein] + ADP + H(+). Functionally, transmembrane tyrosine-protein kinase. Required for the formation of facial lymphatic structures and brain lymphatic endothelial cells. Also required for embryonic ventral and dorsal migration of parachordal lymphoblasts along the arterial intersegmental vessel. Plays a role in the embryonic formation of the dorsal longitudinal anastomotic vessel. In Danio rerio (Zebrafish), this protein is Tyrosine-protein kinase receptor Tie-1 (tie1).